Consider the following 643-residue polypeptide: Carboxy-terminal kinesin 2 (643 aa).

Disordered regions lie at residues 1–42 (MDST…SSLE) and 81–101 (MRPKNSGPGITSTSFSGKTKV). The tract at residues 1-116 (MDSTDKKVQV…QPAAIGAEKK (116 aa)) is globular. Positions 88-101 (PGITSTSFSGKTKV) are enriched in polar residues. Positions 117-296 (KRAAWDLKGQ…LVQELKGNIR (180 aa)) form a coiled coil. A Kinesin motor domain is found at 294–633 (NIRVFCRVRP…LRFASKVNEC (340 aa)). 386–393 (GQTGSGKT) lines the ATP pocket.

The protein belongs to the TRAFAC class myosin-kinesin ATPase superfamily. Kinesin family. NCD subfamily.

The protein resides in the cytoplasm. It is found in the cytoskeleton. In terms of biological role, promotes mitotic spindle assembly. The protein is Carboxy-terminal kinesin 2 of Xenopus laevis (African clawed frog).